The primary structure comprises 346 residues: Methylthioribose-1-phosphate isomerase (346 aa).

Residues Arg-46–Ala-48, Arg-89, and Gln-196 each bind substrate. The Proton donor role is filled by Asp-237. Asn-247 to Lys-248 contacts substrate.

The protein belongs to the eIF-2B alpha/beta/delta subunits family. MtnA subfamily.

It carries out the reaction 5-(methylsulfanyl)-alpha-D-ribose 1-phosphate = 5-(methylsulfanyl)-D-ribulose 1-phosphate. It functions in the pathway amino-acid biosynthesis; L-methionine biosynthesis via salvage pathway; L-methionine from S-methyl-5-thio-alpha-D-ribose 1-phosphate: step 1/6. Its function is as follows. Catalyzes the interconversion of methylthioribose-1-phosphate (MTR-1-P) into methylthioribulose-1-phosphate (MTRu-1-P). This Trichlorobacter lovleyi (strain ATCC BAA-1151 / DSM 17278 / SZ) (Geobacter lovleyi) protein is Methylthioribose-1-phosphate isomerase.